We begin with the raw amino-acid sequence, 312 residues long: Putative endonuclease 4 (312 aa).

The Zn(2+) site is built by His-84, His-127, Glu-166, Asp-202, His-205, His-239, Asp-252, His-254, and Glu-284.

This sequence belongs to the AP endonuclease 2 family. The cofactor is Zn(2+).

It carries out the reaction Endonucleolytic cleavage to 5'-phosphooligonucleotide end-products.. Endonuclease IV plays a role in DNA repair. It cleaves phosphodiester bonds at apurinic or apyrimidinic sites (AP sites) to produce new 5'-ends that are base-free deoxyribose 5-phosphate residues. This Acanthamoeba polyphaga (Amoeba) protein is Putative endonuclease 4.